Consider the following 173-residue polypeptide: Alpha-crystallin A chain (173 aa).

Methionine 1 carries the post-translational modification N-acetylmethionine. Positions 1 to 63 are required for complex formation with BFSP1 and BFSP2; sequence MDIAIQHPWF…RSVLDSGISE (63 aa). A Deamidated glutamine; partial modification is found at glutamine 6. A Phosphoserine modification is found at serine 45. Position 50 is a deamidated glutamine; partial (glutamine 50). The 111-residue stretch at 52–162 folds into the sHSP domain; it reads LFRSVLDSGI…GHSERAIPVS (111 aa). Position 70 is an N6-acetyllysine (lysine 70). Residue glutamine 90 is modified to Deamidated glutamine; partial. Lysine 99 is subject to N6-acetyllysine. Histidine 100 is a Zn(2+) binding site. Asparagine 101 carries the post-translational modification Deamidated asparagine; partial. Zn(2+) is bound by residues glutamate 102 and histidine 107. Serine 122 is modified (phosphoserine). A Deamidated asparagine; partial modification is found at asparagine 123. The disordered stretch occupies residues 144–173; that stretch reads PKVTSGMDAGHSERAIPVSREEKPSSAPSS. Basic and acidic residues predominate over residues 153–167; it reads GHSERAIPVSREEKP. Position 154 (histidine 154) interacts with Zn(2+). O-linked (GlcNAc) serine glycosylation is present at serine 162.

The protein belongs to the small heat shock protein (HSP20) family. In terms of assembly, heteromer composed of three CRYAA and one CRYAB subunits. Inter-subunit bridging via zinc ions enhances stability, which is crucial as there is no protein turn over in the lens. Can also form homodimers and homotetramers (dimers of dimers) which serve as the building blocks of homooligomers. Within homooligomers, the zinc-binding motif is created from residues of 3 different molecules. His-100 and Glu-102 from one molecule are ligands of the zinc ion, and His-107 and His-154 residues from additional molecules complete the site with tetrahedral coordination geometry. Part of a complex required for lens intermediate filament formation composed of BFSP1, BFSP2 and CRYAA. In terms of processing, acetylation at Lys-70 may increase chaperone activity. Post-translationally, undergoes age-dependent proteolytical cleavage at the C-terminus.

It is found in the cytoplasm. Its subcellular location is the nucleus. Functionally, contributes to the transparency and refractive index of the lens. Acts as a chaperone, preventing aggregation of various proteins under a wide range of stress conditions. Required for the correct formation of lens intermediate filaments as part of a complex composed of BFSP1, BFSP2 and CRYAA. This chain is Alpha-crystallin A chain (CRYAA), found in Phocoena phocoena (Harbor porpoise).